We begin with the raw amino-acid sequence, 184 residues long: Peptide deformylase 2 (184 aa).

Fe cation contacts are provided by Cys-110 and His-153. Glu-154 is a catalytic residue. A Fe cation-binding site is contributed by His-157.

It belongs to the polypeptide deformylase family. Fe(2+) is required as a cofactor.

The enzyme catalyses N-terminal N-formyl-L-methionyl-[peptide] + H2O = N-terminal L-methionyl-[peptide] + formate. Functionally, removes the formyl group from the N-terminal Met of newly synthesized proteins. Requires at least a dipeptide for an efficient rate of reaction. N-terminal L-methionine is a prerequisite for activity but the enzyme has broad specificity at other positions. The polypeptide is Peptide deformylase 2 (Geobacillus stearothermophilus (Bacillus stearothermophilus)).